The sequence spans 405 residues: Indoleamine 2,3-dioxygenase 2 (405 aa).

His347 serves as a coordination point for heme.

Belongs to the indoleamine 2,3-dioxygenase family. The cofactor is heme. In terms of tissue distribution, expressed mainly in antigen-presenting immune cells, liver, kidney, brain, and placenta. Highly expressed in kidney, followed by epididymis and liver (at protein level). Detected in the tails of the spermatozoa in the testis and in the kidney tubules (at protein level). Constitutively expressed in brain.

It carries out the reaction L-tryptophan + O2 = N-formyl-L-kynurenine. It functions in the pathway amino-acid degradation; L-tryptophan degradation via kynurenine pathway; L-kynurenine from L-tryptophan: step 1/2. With respect to regulation, activity is inhibited by D-1MT (1-methyl-D-tryptophan) and MTH-trp (methylthiohydantoin-DL-tryptophan) but not L-1MT (1-methyl-L-tryptophan). Catalyzes the first and rate-limiting step in the kynurenine pathway of tryptophan catabolism. Involved in immune regulation. This Mus musculus (Mouse) protein is Indoleamine 2,3-dioxygenase 2.